The sequence spans 531 residues: Peptide chain release factor 3 (531 aa).

The tr-type G domain maps to Arg-10–Lys-278. GTP-binding positions include Ser-19–Thr-26, Asp-87–His-91, and Asn-141–Asp-144.

Belongs to the TRAFAC class translation factor GTPase superfamily. Classic translation factor GTPase family. PrfC subfamily.

The protein localises to the cytoplasm. Its function is as follows. Increases the formation of ribosomal termination complexes and stimulates activities of RF-1 and RF-2. It binds guanine nucleotides and has strong preference for UGA stop codons. It may interact directly with the ribosome. The stimulation of RF-1 and RF-2 is significantly reduced by GTP and GDP, but not by GMP. In Neisseria gonorrhoeae (strain ATCC 700825 / FA 1090), this protein is Peptide chain release factor 3.